Consider the following 357-residue polypeptide: Glycerol-1-phosphate dehydrogenase [NAD(P)+] (357 aa).

NAD(+)-binding positions include 104–108 (GKTID) and 126–129 (TAAS). Position 131 (Asp-131) interacts with substrate. Ser-135 is a binding site for NAD(+). Asp-178 serves as a coordination point for substrate. The Zn(2+) site is built by Asp-178 and His-258. His-262 is a substrate binding site. His-274 is a binding site for Zn(2+).

The protein belongs to the glycerol-1-phosphate dehydrogenase family. It depends on Zn(2+) as a cofactor.

The protein resides in the cytoplasm. The enzyme catalyses sn-glycerol 1-phosphate + NAD(+) = dihydroxyacetone phosphate + NADH + H(+). It carries out the reaction sn-glycerol 1-phosphate + NADP(+) = dihydroxyacetone phosphate + NADPH + H(+). The protein operates within membrane lipid metabolism; glycerophospholipid metabolism. Its function is as follows. Catalyzes the NAD(P)H-dependent reduction of dihydroxyacetonephosphate (DHAP or glycerone phosphate) to glycerol 1-phosphate (G1P). The G1P thus generated is used as the glycerophosphate backbone of phospholipids in the cellular membranes of Archaea. This chain is Glycerol-1-phosphate dehydrogenase [NAD(P)+], found in Methanococcoides burtonii (strain DSM 6242 / NBRC 107633 / OCM 468 / ACE-M).